Reading from the N-terminus, the 279-residue chain is Alcohol dehydrogenase-related 31 kDa protein (279 aa).

Tyr-11 to Leu-34 serves as a coordination point for NAD(+). Residue Ser-139 coordinates substrate. The active-site Proton acceptor is Tyr-152.

This sequence belongs to the short-chain dehydrogenases/reductases (SDR) family.

In Drosophila subobscura (Fruit fly), this protein is Alcohol dehydrogenase-related 31 kDa protein (Adhr).